The primary structure comprises 65 residues: Temporin-SN1 (65 aa).

The first 22 residues, Met-1–Cys-22, serve as a signal peptide directing secretion. The propeptide at Gln-23–Gln-44 is removed in mature form. Position 65 is a lysine amide (Lys-65).

Belongs to the frog skin active peptide (FSAP) family. Temporin subfamily. Expressed by the skin glands.

The protein resides in the secreted. Its function is as follows. Antimicrobial peptide. Active against a variety of Gram-positive bacterial strains. Not active against Gram-negative bacteria and against fungi. Shows hemolytic activity against human erythrocytes. The sequence is that of Temporin-SN1 from Sylvirana spinulosa (Fine-spined frog).